Here is an 848-residue protein sequence, read N- to C-terminus: MNYVGQLAETVFGTVKELYRGLNPATLSGGIDVLVVRQRDGSFRCSPFHVRFGKLGVLRSREKVVDIEINGEPVDLHMKLGDSGEAFFVQELDSDEEDVPPRLCTSPIPWGGLSGFPSDSQIGTASEPEGLVITGRRKRRRRRKPRRREEDAVDSSSEELEAGAESELTLLEKPTPESPSAQEAEEPSSQPKDIHPYSDGECTPQANLSSGDLMSPKSDSELELRSLEPSPLRAESHMQWVWGRLPKVAKAERPEFSLILESMAEAICALPEEPSPSSSPSEAGVDTLSPPVLHPGVRADTFHPAVEAHCEETAVDSPLAAPESKETKTQNSRGAGHPPATKSWSWTTPESHTPSGHPQVSRGKGSLKRNQHLGPSDIYLDDLPSLDSENVALYFPKSEYGMGARRWSEPSNQKLLESPNPEHIAECTLDSVDKIELSLCGGLADNRDISLEKFTQHMVSYEDLTKNPGLLDDPNLVVKINEKHYNWAVAAPMILSLQAFQKNLPESTVDKLEKEKMPRKGGRWWFSWRRRDFPAEEHSSQREKAATRKQQGEKTEVLSSDDDVPDSPVILEVPPLPSSTPGYVPTYKKSLRLSSDQIRCLNLNEGANDVVFSVTTQYQGTCRCKATIYLWNWDDKVVISDIDGTITKSDALGHILPQLGKDWTHQGITSLYHKIHLNGYKFLYCSARAIGMADLTKGYLQWVSEHGCGLPKGPILLSPSSLFSALHREVIEKKPEVFKVACLSDIQQLFLPQRQPFHAAFGNRPNDVFAYRQVGLPESRIFTVNPRGELIQELIKSHKSTYQRLGEVVELLFPPVVRGPSTDLASPEYSNLSYWRKPLPYVDFEALA.

The N-LIP stretch occupies residues 1–108 (MNYVGQLAET…VPPRLCTSPI (108 aa)). Disordered stretches follow at residues 97-233 (EDVP…SPLR), 271-298 (PEEPSPSSSPSEAGVDTLSPPVLHPGVR), and 314-373 (AVDS…NQHL). A Nuclear localization signal motif is present at residues 135 to 144 (GRRKRRRRRK). Residues 135–146 (GRRKRRRRRKPR) show a composition bias toward basic residues. The segment covering 151-164 (DAVDSSSEELEAGA) has biased composition (acidic residues). A phosphoserine mark is found at S155 and S156. The segment covering 165 to 191 (ESELTLLEKPTPESPSAQEAEEPSSQP) has biased composition (low complexity). Phosphoserine is present on S218. The span at 271 to 282 (PEEPSPSSSPSE) shows a compositional bias: low complexity. Polar residues predominate over residues 342–358 (KSWSWTTPESHTPSGHP). At S460 the chain carries Phosphoserine. Residues 536 to 556 (EEHSSQREKAATRKQQGEKTE) show a composition bias toward basic and acidic residues. The interval 536–568 (EEHSSQREKAATRKQQGEKTEVLSSDDDVPDSP) is disordered. Positions 587–789 (YKKSLRLSSD…RIFTVNPRGE (203 aa)) are C-LIP. Positions 641–645 (DIDGT) match the DXDXT motif motif. Positions 652-656 (LGHIL) match the LXXIL motif motif.

It belongs to the lipin family. Mg(2+) serves as cofactor. Significant expression in intestine and other regions of the gastrointestinal tract.

The protein localises to the nucleus. The enzyme catalyses a 1,2-diacyl-sn-glycero-3-phosphate + H2O = a 1,2-diacyl-sn-glycerol + phosphate. With respect to regulation, inhibited by N-ethylmaleimide. Functionally, magnesium-dependent phosphatidate phosphatase enzyme which catalyzes the conversion of phosphatidic acid to diacylglycerol during triglyceride, phosphatidylcholine and phosphatidylethanolamine biosynthesis therefore regulates fatty acid metabolism. The protein is Phosphatidate phosphatase LPIN3 of Mus musculus (Mouse).